Reading from the N-terminus, the 234-residue chain is LexA repressor (234 aa).

The segment at residues 26–46 (FDEMKTALELTSKSGIHRLIT) is a DNA-binding region (H-T-H motif). Active-site for autocatalytic cleavage activity residues include Ser-155 and Lys-193.

The protein belongs to the peptidase S24 family. As to quaternary structure, homodimer.

It carries out the reaction Hydrolysis of Ala-|-Gly bond in repressor LexA.. In terms of biological role, represses a number of genes involved in the response to DNA damage (SOS response), including recA and lexA. In the presence of single-stranded DNA, RecA interacts with LexA causing an autocatalytic cleavage which disrupts the DNA-binding part of LexA, leading to derepression of the SOS regulon and eventually DNA repair. The chain is LexA repressor from Bartonella henselae (strain ATCC 49882 / DSM 28221 / CCUG 30454 / Houston 1) (Rochalimaea henselae).